Here is a 950-residue protein sequence, read N- to C-terminus: Serine/threonine-protein kinase 10-A (950 aa).

The Protein kinase domain maps to 36–294 (WEIIGELGDG…AAQLLEHPFV (259 aa)). Residues 42–50 (LGDGAFGKV) and Lys65 contribute to the ATP site. Catalysis depends on Asp157, which acts as the Proton acceptor. Over residues 319–331 (EEQGEAEEEEDSD) the composition is skewed to acidic residues. Residues 319–478 (EEQGEAEEEE…DSGSNSASES (160 aa)) are disordered. Residues 347–356 (EIGKDIEREQ) show a composition bias toward basic and acidic residues. Positions 365–382 (SATSPQKTDSQADNYSQR) are enriched in polar residues. The segment covering 416–432 (EPKRNSTAESYRGEEHS) has biased composition (basic and acidic residues). The span at 433–445 (SASSQRQRSAQSA) shows a compositional bias: low complexity. Residues 452–463 (SFDSPTRYFTNW) are compositionally biased toward polar residues. Residues Ser482, Ser486, and Ser490 each carry the phosphoserine; by PLK1 modification. The stretch at 634–786 (IKFLEQLKLR…QLRLRQQQEK (153 aa)) forms a coiled coil.

It belongs to the protein kinase superfamily. STE Ser/Thr protein kinase family. STE20 subfamily. Homodimer. Autophosphorylates. Phosphorylated by plk1/plx1, suggesting the existence of a feedback loop with plk1/plx1. activation of the protein.

The protein resides in the cell membrane. It carries out the reaction L-seryl-[protein] + ATP = O-phospho-L-seryl-[protein] + ADP + H(+). The catalysed reaction is L-threonyl-[protein] + ATP = O-phospho-L-threonyl-[protein] + ADP + H(+). May act as a polo kinase kinase by mediating phosphorylation of plk1/plx1 and subsequent activation of plk1/plx1 during oocyte maturation. The sequence is that of Serine/threonine-protein kinase 10-A (stk10-a) from Xenopus laevis (African clawed frog).